Consider the following 231-residue polypeptide: Large ribosomal subunit protein uL1 (231 aa).

The protein belongs to the universal ribosomal protein uL1 family. Part of the 50S ribosomal subunit.

In terms of biological role, binds directly to 23S rRNA. The L1 stalk is quite mobile in the ribosome, and is involved in E site tRNA release. Protein L1 is also a translational repressor protein, it controls the translation of the L11 operon by binding to its mRNA. This chain is Large ribosomal subunit protein uL1, found in Alcanivorax borkumensis (strain ATCC 700651 / DSM 11573 / NCIMB 13689 / SK2).